Reading from the N-terminus, the 145-residue chain is 3-hydroxyacyl-[acyl-carrier-protein] dehydratase FabZ (145 aa).

His47 is an active-site residue.

This sequence belongs to the thioester dehydratase family. FabZ subfamily.

It localises to the cytoplasm. The enzyme catalyses a (3R)-hydroxyacyl-[ACP] = a (2E)-enoyl-[ACP] + H2O. Functionally, involved in unsaturated fatty acids biosynthesis. Catalyzes the dehydration of short chain beta-hydroxyacyl-ACPs and long chain saturated and unsaturated beta-hydroxyacyl-ACPs. This is 3-hydroxyacyl-[acyl-carrier-protein] dehydratase FabZ from Polaromonas naphthalenivorans (strain CJ2).